Reading from the N-terminus, the 277-residue chain is MDVNTERSVFYISDGTAITAEVLGHAVMSQFPVATHGVTLPFVETVQRAQAVKAQINALYQQSGLRPLVFISIVTPVIRDIILQSDGFCQDIVQSLVGPLQQELGLLPAPVANRTHGLTAGNLSKYDARIAAIDYTLAHDDGISLRGLEDAQVILLGVSRCGKTPTSLYLAMQFGIRAANYPFIADDMDNLKLPAALKPFQHKLFGLTIEPERLAAIRQERAENTRYASLRQCRLEVGEVEALFRTQQIRYLNSTNYSVEEIATKILDIMSLTRRMY.

157 to 164 is a binding site for ADP; the sequence is GVSRCGKT.

This sequence belongs to the pyruvate, phosphate/water dikinase regulatory protein family. PSRP subfamily.

The catalysed reaction is [pyruvate, water dikinase] + ADP = [pyruvate, water dikinase]-phosphate + AMP + H(+). It catalyses the reaction [pyruvate, water dikinase]-phosphate + phosphate + H(+) = [pyruvate, water dikinase] + diphosphate. Functionally, bifunctional serine/threonine kinase and phosphorylase involved in the regulation of the phosphoenolpyruvate synthase (PEPS) by catalyzing its phosphorylation/dephosphorylation. The protein is Putative phosphoenolpyruvate synthase regulatory protein of Erwinia tasmaniensis (strain DSM 17950 / CFBP 7177 / CIP 109463 / NCPPB 4357 / Et1/99).